A 1513-amino-acid chain; its full sequence is DNA polymerase alpha catalytic subunit (1513 aa).

Residues 235 to 254 (STNQNANASDSKRVSNQTND) form a disordered region. Zn(2+) contacts are provided by Cys1344, Cys1347, Cys1370, Cys1373, Cys1404, Cys1409, Cys1422, and Cys1427. A CysA-type zinc finger spans residues 1344 to 1373 (CPHCSESYHFPGIFQDGKNNTLSGLLCIKC). The CysB motif motif lies at 1404 to 1427 (CQEPACGAVSRQLLYNNKCINLAC).

It belongs to the DNA polymerase type-B family.

The protein localises to the nucleus. The catalysed reaction is DNA(n) + a 2'-deoxyribonucleoside 5'-triphosphate = DNA(n+1) + diphosphate. Functionally, polymerase alpha in a complex with DNA primase is a replicative polymerase. The protein is DNA polymerase alpha catalytic subunit of Oxytricha trifallax (Sterkiella histriomuscorum).